Reading from the N-terminus, the 276-residue chain is MPIDNLPPLREVIDTYGLQAHKSLGQNFLFDLNLTSKIAHQAGTIEGKPVLEIGPGPGGLTRALLAKGAIVTAIERDERCIPALLEIEKHYPNQLKLICNDALKQDFSKLFGSSPEKPRIIANLPYNIGTQLLLNWLLVEPWPPFYESMTLMFQREVAKRITAKPQSSHYGRLSVLTGWRTIAKIAFDVPPQAFIPAPKVTSSVVHIIPRAQPLVCSAQKLSLITKTAFGQRRKMLRQNLKTLGGEIILEKAGIDGTRRAETLSISEFVTLANLIT.

Residues N27, L29, G54, E75, D101, and N123 each contribute to the S-adenosyl-L-methionine site.

It belongs to the class I-like SAM-binding methyltransferase superfamily. rRNA adenine N(6)-methyltransferase family. RsmA subfamily.

Its subcellular location is the cytoplasm. The enzyme catalyses adenosine(1518)/adenosine(1519) in 16S rRNA + 4 S-adenosyl-L-methionine = N(6)-dimethyladenosine(1518)/N(6)-dimethyladenosine(1519) in 16S rRNA + 4 S-adenosyl-L-homocysteine + 4 H(+). In terms of biological role, specifically dimethylates two adjacent adenosines (A1518 and A1519) in the loop of a conserved hairpin near the 3'-end of 16S rRNA in the 30S particle. May play a critical role in biogenesis of 30S subunits. The sequence is that of Ribosomal RNA small subunit methyltransferase A from Bartonella tribocorum (strain CIP 105476 / IBS 506).